Reading from the N-terminus, the 221-residue chain is N-(5'-phosphoribosyl)anthranilate isomerase (221 aa).

The protein belongs to the TrpF family.

It carries out the reaction N-(5-phospho-beta-D-ribosyl)anthranilate = 1-(2-carboxyphenylamino)-1-deoxy-D-ribulose 5-phosphate. The protein operates within amino-acid biosynthesis; L-tryptophan biosynthesis; L-tryptophan from chorismate: step 3/5. This chain is N-(5'-phosphoribosyl)anthranilate isomerase, found in Geobacillus thermodenitrificans (strain NG80-2).